Here is a 1146-residue protein sequence, read N- to C-terminus: Probable transport protein MmpL12 (1146 aa).

11 consecutive transmembrane segments (helical) span residues 25–45, 206–226, 254–274, 298–318, 330–350, 382–402, 826–846, 850–870, 883–903, 928–948, and 949–969; these read LIVIGCWIAVAAALTLLLPTL, VSVLIILILVYRNLVTMLVPL, AIVFMSAVMIGAGTDYAVFLI, IGKVITASAATVAVTFLAMVF, AIAVAITVSLLGAVTLLPAIL, TIHLVGSLIVLVALAGCTLLI, FIVIATIVIVFLILVILLRAL, IYLIGSVLISYLSALGIGTLV, LPGLSFILLVAIGADYNMLLI, VITSAGLIFAASMFGLVGASI, and NTMAQAGFTIGIGIVLDTFLV.

The protein belongs to the resistance-nodulation-cell division (RND) (TC 2.A.6) family. MmpL subfamily.

The protein resides in the cell membrane. The protein is Probable transport protein MmpL12 (mmpL12) of Mycobacterium tuberculosis (strain CDC 1551 / Oshkosh).